A 955-amino-acid polypeptide reads, in one-letter code: Mediator of RNA polymerase II transcription subunit 16 (955 aa).

It belongs to the Mediator complex subunit 16 family. Component of the Mediator complex.

Its subcellular location is the nucleus. Component of the Mediator complex, a coactivator involved in the regulated transcription of nearly all RNA polymerase II-dependent genes. Mediator functions as a bridge to convey information from gene-specific regulatory proteins to the basal RNA polymerase II transcription machinery. Mediator is recruited to promoters by direct interactions with regulatory proteins and serves as a scaffold for the assembly of a functional preinitiation complex with RNA polymerase II and the general transcription factors. The sequence is that of Mediator of RNA polymerase II transcription subunit 16 (sin4) from Neosartorya fischeri (strain ATCC 1020 / DSM 3700 / CBS 544.65 / FGSC A1164 / JCM 1740 / NRRL 181 / WB 181) (Aspergillus fischerianus).